The following is a 124-amino-acid chain: MAATPVPTALGAYRLLLRATRIAFHGDFTTLHAARAEARKQFDQHRELGVDTPMRIQHAVETAEILRTNVVQGIKVSDAGEDTDRYELRIHEHIERGDNDTIKTAGKNKKVKVAVGKTCSNTQS.

The protein belongs to the complex I LYR family. MZM1 subfamily. Interacts with RIP1.

It localises to the mitochondrion matrix. In terms of biological role, assembly factor required for Rieske Fe-S protein RIP1 incorporation into the cytochrome b-c1 (CIII) complex. Functions as a chaperone, binding to this subunit within the mitochondrial matrix and stabilizing it prior to its translocation and insertion into the late CIII dimeric intermediate within the mitochondrial inner membrane. Modulates the mitochondrial matrix zinc pool. This Ajellomyces dermatitidis (strain ER-3 / ATCC MYA-2586) (Blastomyces dermatitidis) protein is Mitochondrial zinc maintenance protein 1, mitochondrial (MZM1).